The sequence spans 141 residues: D-aminoacyl-tRNA deacylase (141 aa).

The Gly-cisPro motif, important for rejection of L-amino acids signature appears at 133–134 (GP).

This sequence belongs to the DTD family. Homodimer.

The protein resides in the cytoplasm. The enzyme catalyses glycyl-tRNA(Ala) + H2O = tRNA(Ala) + glycine + H(+). The catalysed reaction is a D-aminoacyl-tRNA + H2O = a tRNA + a D-alpha-amino acid + H(+). Functionally, an aminoacyl-tRNA editing enzyme that deacylates mischarged D-aminoacyl-tRNAs. Also deacylates mischarged glycyl-tRNA(Ala), protecting cells against glycine mischarging by AlaRS. Acts via tRNA-based rather than protein-based catalysis; rejects L-amino acids rather than detecting D-amino acids in the active site. By recycling D-aminoacyl-tRNA to D-amino acids and free tRNA molecules, this enzyme counteracts the toxicity associated with the formation of D-aminoacyl-tRNA entities in vivo and helps enforce protein L-homochirality. This chain is D-aminoacyl-tRNA deacylase, found in Nautilia profundicola (strain ATCC BAA-1463 / DSM 18972 / AmH).